We begin with the raw amino-acid sequence, 196 residues long: Large ribosomal subunit protein uL5 (196 aa).

The protein belongs to the universal ribosomal protein uL5 family. In terms of assembly, part of the 50S ribosomal subunit; part of the 5S rRNA/L5/L18/L25 subcomplex. Contacts the 5S rRNA and the P site tRNA. Forms a bridge to the 30S subunit in the 70S ribosome.

This is one of the proteins that bind and probably mediate the attachment of the 5S RNA into the large ribosomal subunit, where it forms part of the central protuberance. In the 70S ribosome it contacts protein S13 of the 30S subunit (bridge B1b), connecting the 2 subunits; this bridge is implicated in subunit movement. Contacts the P site tRNA; the 5S rRNA and some of its associated proteins might help stabilize positioning of ribosome-bound tRNAs. The protein is Large ribosomal subunit protein uL5 of Chlorobium phaeobacteroides (strain BS1).